A 95-amino-acid chain; its full sequence is uncharacterized protein (95 aa).

A coiled-coil region spans residues 14 to 50 (KMEQKLQEQLDGLLEKYTELLLGETNDELKEEVKQWI).

This is an uncharacterized protein from Bacillus subtilis (strain 168).